The sequence spans 907 residues: Leucine--tRNA ligase (907 aa).

The 'HIGH' region motif lies at 42–52; that stretch reads PYPSGKLHMGH. The short motif at 651–655 is the 'KMSKS' region element; it reads TMSKS. Lys654 is an ATP binding site.

This sequence belongs to the class-I aminoacyl-tRNA synthetase family.

The protein localises to the cytoplasm. The enzyme catalyses tRNA(Leu) + L-leucine + ATP = L-leucyl-tRNA(Leu) + AMP + diphosphate. The sequence is that of Leucine--tRNA ligase from Verminephrobacter eiseniae (strain EF01-2).